The sequence spans 493 residues: WAS/WASL-interacting protein family member 1 (493 aa).

A compositionally biased stretch (pro residues) spans 1–14 (MPVPPPPAPPPPPT). A disordered region spans residues 1–493 (MPVPPPPAPP…GAPPLPPIPR (493 aa)). Residues 21 to 31 (EKPTLNKTEQA) show a composition bias toward polar residues. The region spanning 32 to 49 (GRNALLSDISKGKKLKKT) is the WH2 domain. R33 bears the Asymmetric dimethylarginine mark. The tract at residues 45 to 48 (KLKK) is binds actin. The segment covering 67 to 105 (ASAGGYGGGGGGGGGGGGGGGGSGGNFGGGGPPGLGGLF) has biased composition (gly residues). 2 positions are modified to omega-N-methylarginine: R126 and R135. 3 stretches are compositionally biased toward pro residues: residues 142-155 (FSPP…PAPS), 162-175 (PPEP…PPRP), and 183-195 (SLPP…PRPV). S143 is modified (phosphoserine). The residue at position 227 (S227) is a Phosphoserine. Pro residues-rich tracts occupy residues 239 to 248 (FPRPPLPPTP), 274 to 290 (VPPP…PSTP), and 298 to 315 (APPP…PLPP). Phosphoserine occurs at positions 330 and 340. Positions 336–361 (PPLPSPGRSGPLPPPPSERPPPPVRD) are enriched in pro residues. 3 XRSGPXPPXP motif repeats span residues 342–351 (GRSGPLPPPP), 364–373 (GRSGPLPPPP), and 400–409 (PRSGPRPPLP). Residues 403 to 424 (GPRPPLPPDRPGAGAPPPPPPS) are compositionally biased toward pro residues. The segment covering 425–434 (TSVRNGFQDS) has biased composition (polar residues). The span at 470–484 (ARNESRSGSNRRERG) shows a compositional bias: basic and acidic residues.

This sequence belongs to the verprolin family. Binds to WAS within the N-terminal region, at a site distinct from the CDC42-binding site. Binds profilin and actin. Binds to WASL. Interacts with DBNL. Interacts with DBNL. Interacts with FNBP1L (via the SH3 domain).

It localises to the cytoplasmic vesicle. It is found in the cytoplasm. The protein resides in the cytoskeleton. Its subcellular location is the cell projection. The protein localises to the ruffle. Functionally, plays a role in the reorganization of the actin cytoskeleton. Contributes with NCK1 and GRB2 in the recruitment and activation of WASL. May participate in regulating the subcellular localization of WASL, resulting in the disassembly of stress fibers in favor of filopodia formation. Plays a role in the formation of cell ruffles. The sequence is that of WAS/WASL-interacting protein family member 1 (Wipf1) from Mus musculus (Mouse).